The following is a 1896-amino-acid chain: MAVPLERAFASVTQSFHKDATQGPTTNEYLVARAETQRYAPYAVRKGPAALLAQVGINTIHDSPLSHSHPACYALNAFHFLKVIPRYLHGKAEVWGTKDNWFRKLQAQIDSQTTTLTHRNYAITARDHVRYPGTVVDHPGSCTAGTLFMHDALQYMTPLDVYTLFATSPEMHSLVATAVIPPESVDRLPAFWPELYQLAYYEDHLCYAPDGNFADAYNQPLAAHQWMTMKSLHGPDFTLSVDVPASRYSHHIFVISKRPGLPDTHRDFMCPDLVELPKDFFPGANKADKLLPRTLVNQMVEYAASVKRATIKDATSRTRAYVKDQKYAAVTPVQQMYLSWFGSGLSQMQFPDRPVTPLDNFATALWYRLLPSRLYRLPATIRNFQLKAFVDQLRTPQYLLHFKLDEYHLSSNDKYSDFYRNESRQASSKDMLSAFEAICFGGAPELEKKILGNNNPAPFATVPNPPSQTALGLATITAAIAFILPNRAARLTRLVARYAIRAVKEIVNPSFLTIPRFGLLSHSIASWLQTDGAVITYGLAPKIASWSAPIWYNAALLAPTDMRSCQVLVDIANDLRFDYRYGTMRLAVTLGLTLLNPFLRRLVLLPFKVLWHSYLPSIKNKLDSMVLMSISTLPDNISVPLLTLRGNLNRQRCPDNKDPTPIHESDDNSTADDKCLHCPIHCLKSKLSEPAASPDTVPEDNPLQEGDLTEEVYAAALAKKDTPPPYPTRNDCLLVALADGLLTKRILWFSCIKMFGNTACWVIHDTGKAFDWMHLKMLAEQLKLNVSIEVAAEHDHHWTGLAKRVGPIDGRKIALRWYPYHWELSDRGREDYGPPPPPPPPSTTEPPPPPNPPAASPYHSPTVEDEPLEEIPLANSNGEFSTFAFDDMAADDLNPAQPLSSLDLDEEPSAKQEPLEPAAIKTSEPEPLVPESEEVFFRPSPTPTPSDATPTPAARAPSSVSNENAQRPRHPLPPVPTGGASAPSNDKLNSAAKQYARLVAGKTRQMTVAQPRSKAYLRDLKRGNIGTIPTAEAEQLDAYIDSWAVNGFNRSVHVIYFCGLPGTGKSRRCMKMTERLLKENKYLAQTVRIVTPTDNLRNSVARQLKPPTESSYSVQTYETPIRQPSLGPVLIVDEYGKMPAGWLETVLFLNPRVQMVIFTADPTQGIFRTRIPDAYCCRIPSSTEAIASYAHEYRRVSDRPAPGVARALGLPTTSRRPGQIETSTELNVDWITVRPEGERAAWHNTWGGKVYTYATCQGETFHRAYQMVINGNTRFWDDRDLFAALTRGSGTLRLIYETQSSKPLPRSTSKLYNALLDFRTDPHKLPLAIEEHVNRYIPSHLRNVNQAVPRRNAASNPDALPSQRILPGGQSTTAEPXQSQASALPTGGEAIDVPALDRQDPQRFPQLKVLPHLCGYIGDYSEASYPEPEHPKTQMLDATFPTYLARNRGWNDPALTDAVTANYKAPEHRDIWVEAVGETTRQVHGSGDDRDVFLEHRGDDKATANITYAKRLRFSQRAANERSIAATKVAGSELFEAFTRAIPLPQETFNDSLLEECRTENDTVHLTSKPLATLINNAERSDPSWSLNMIKLFIKGQTVKKLEKMGSDATAGQSIASFRAEVLLAWGPYARYIDRRIRALLPPHVYIHSRRTNEDFEKFVAAHWDHTRESTDGDYTAYDASQDATFVNFETLLMRRLDFPLDIIEAYVEMKASITSHFGPLAIMRFSGEVWTYLFNTLGNIAFTYAKYEVPSVAQVYGGDDKSINSPITVRTGWSQLVGKFNLVEKPVVGYEPTFCGWRIVPGGIVKDPQLLFWRTRYARIRYDAALWAPGYYDELVLSLKTSDRLMDHMSPNDLAYLQALVRFYTKLSRRLPSLADRRRCNPLPADSPSVVLSRD.

The Alphavirus-like MT domain occupies 60 to 227; sequence IHDSPLSHSH…NQPLAAHQWM (168 aa). Disordered regions lie at residues 828–866 and 891–987; these read GREDYGPPPPPPPPSTTEPPPPPNPPAASPYHSPTVEDE and DDLN…SNDK. Residues 833-855 are compositionally biased toward pro residues; it reads GPPPPPPPPSTTEPPPPPNPPAA. Positions 945–959 are enriched in low complexity; the sequence is PSDATPTPAARAPSS. ATP is bound by residues 996–1003 and 1059–1066; these read ARLVAGKT and GLPGTGKS. The 170-residue stretch at 1025–1194 folds into the (+)RNA virus helicase ATP-binding domain; the sequence is IGTIPTAEAE…AIASYAHEYR (170 aa). In terms of domain architecture, (+)RNA virus helicase C-terminal spans 1195–1327; it reads RVSDRPAPGV…FRTDPHKLPL (133 aa). The tract at residues 1347-1385 is disordered; it reads AVPRRNAASNPDALPSQRILPGGQSTTAEPXQSQASALP. The segment covering 1369–1383 has biased composition (polar residues); that stretch reads GQSTTAEPXQSQASA. The 107-residue stretch at 1668–1774 folds into the RdRp catalytic domain; sequence RESTDGDYTA…NSPITVRTGW (107 aa).

The catalysed reaction is ATP + H2O = ADP + phosphate + H(+). The enzyme catalyses RNA(n) + a ribonucleoside 5'-triphosphate = RNA(n+1) + diphosphate. Its function is as follows. RNA replication protein replicates the viral genomic RNA. The central part of this protein possibly functions as an ATP-binding helicase and/or methyltransferase. The sequence is that of RNA replication protein from Botrytis virus F (isolate Botrytis cinerea/New Zealand/Howitt/2001) (BotV-F).